Consider the following 282-residue polypeptide: tRNA uridine(34) hydroxylase (282 aa).

In terms of domain architecture, Rhodanese spans 128–222 (DGREVVMLDT…YFEEVGADHY (95 aa)). The active-site Cysteine persulfide intermediate is Cys182.

Belongs to the TrhO family.

The catalysed reaction is uridine(34) in tRNA + AH2 + O2 = 5-hydroxyuridine(34) in tRNA + A + H2O. In terms of biological role, catalyzes oxygen-dependent 5-hydroxyuridine (ho5U) modification at position 34 in tRNAs. This is tRNA uridine(34) hydroxylase from Ralstonia nicotianae (strain ATCC BAA-1114 / GMI1000) (Ralstonia solanacearum).